A 677-amino-acid chain; its full sequence is Electrogenic aspartate/glutamate antiporter SLC25A12, mitochondrial (677 aa).

Residue Ala-2 is modified to N-acetylalanine. The regulatory N-terminal domain stretch occupies residues 2-294 (AVKVHTTKRG…TLADIERIAP (293 aa)). The Mitochondrial intermembrane portion of the chain corresponds to 2-329 (AVKVHTTKRG…WLQIAESAYR (328 aa)). EF-hand domains follow at residues 40–85 (VQRY…SVLC), 86–121 (APDS…TIIH), 122–156 (HHIP…FLQE), and 157–192 (LQLE…IRSH). Positions 65, 67, 69, 71, and 76 each coordinate Ca(2+). The interval 295-310 (LAEGALPYNLAELQRQ) is linker loop domain. Residues 320–612 (WLQIAESAYR…RWFYIDFGGL (293 aa)) form a carrier domain region. Solcar repeat units lie at residues 324 to 416 (AESA…VRDK), 424 to 508 (IPLP…CKLL), and 516 to 604 (VGGI…LQRW). Residues 330-347 (FTLGSVAGAVGATAVYPI) form a helical membrane-spanning segment. Residues 348–390 (DLVKTRMQNQRGTGSVVGELMYKNSFDCFKKVLRYEGFFGLYR) are Mitochondrial matrix-facing. The helical transmembrane segment at 391–410 (GLIPQLIGVAPEKAIKLTVN) threads the bilayer. Residues 411–433 (DFVRDKFTKRDGSIPLPAEILAG) lie on the Mitochondrial intermembrane side of the membrane. Residues 434–447 (GCAGGSQVIFTNPL) traverse the membrane as a helical segment. The Mitochondrial matrix portion of the chain corresponds to 448–482 (EIVKIRLQVAGEITTGPRVSALNVLQDLGLFGLYK). A helical membrane pass occupies residues 483-502 (GAKACFLRDIPFSAIYFPVY). Over 503-521 (AHCKLLLADENGRVGGINL) the chain is Mitochondrial intermembrane. The helical transmembrane segment at 522–539 (LTAGALAGVPAASLVTPA) threads the bilayer. At 540–578 (DVIKTRLQVAARAGQTTYSGVVDCFRKILREEGPSAFWK) the chain is on the mitochondrial matrix side. The helical transmembrane segment at 579–598 (GTAARVFRSSPQFGVTLVTY) threads the bilayer. At 599–677 (ELLQRWFYID…AQPKAAAAAQ (79 aa)) the chain is on the mitochondrial intermembrane side. The segment at 613 to 677 (KPSGSEPTPK…AQPKAAAAAQ (65 aa)) is C-terminal domain.

It belongs to the mitochondrial carrier (TC 2.A.29) family. Homodimer (via N-terminus).

It localises to the mitochondrion inner membrane. It carries out the reaction L-aspartate(in) + L-glutamate(out) + H(+)(out) = L-aspartate(out) + L-glutamate(in) + H(+)(in). The catalysed reaction is 3-sulfino-L-alanine(out) + L-glutamate(in) + H(+)(in) = 3-sulfino-L-alanine(in) + L-glutamate(out) + H(+)(out). It catalyses the reaction 3-sulfino-L-alanine(out) + L-aspartate(in) = 3-sulfino-L-alanine(in) + L-aspartate(out). Mitochondrial electrogenic aspartate/glutamate antiporter that favors efflux of aspartate and entry of glutamate and proton within the mitochondria as part of the malate-aspartate shuttle. Also mediates the uptake of L-cysteinesulfinate (3-sulfino-L-alanine) by mitochondria in exchange of L-glutamate and proton. Can also exchange L-cysteinesulfinate with aspartate in their anionic form without any proton translocation. Lacks transport activity towards L-glutamine or gamma-aminobutyric acid (GABA). The polypeptide is Electrogenic aspartate/glutamate antiporter SLC25A12, mitochondrial (Mus musculus (Mouse)).